The following is a 112-amino-acid chain: Carboxysome shell protein CcmK4 (112 aa).

Residues 6 to 92 (AVGSIETIGF…PHENVVAVLP (87 aa)) form the BMC domain.

Belongs to the bacterial microcompartments protein family. CcmK subfamily. As to quaternary structure, homohexamer. Interacts with full-length CcmM. Forms mixed heterohexamers with CcmK3, probably with 1:5 CcmK3:CcmK4 stoichiometry. Only very weak interactions with CcmK1 and CcmK2 were seen.

It is found in the carboxysome. Its function is as follows. A probably minor shell protein component of the carboxysome, a polyhedral inclusion where RuBisCO (ribulose bisphosphate carboxylase, rbcL-rbcS) is sequestered. The central pore probably regulates metabolite flux, as might the gaps between assembled homohexamers. Homohexamers make sheets that probably form the facets of the polyhedral carboxysome. This subunit probably makes both homohexamers and heterohexamers with CcmK3. This is Carboxysome shell protein CcmK4 from Synechocystis sp. (strain ATCC 27184 / PCC 6803 / Kazusa).